The primary structure comprises 856 residues: Cyclic di-GMP phosphodiesterase PdeB (856 aa).

Transmembrane regions (helical) follow at residues 7-27 (ILVF…YCLG) and 230-250 (WVSL…YVWL). Positions 303 to 350 (QKERGKITLESIAEAVILTDIEAKVIYMNPKAETLLEVASSNAVGESL) constitute a PAS domain. One can recognise a GGDEF domain in the interval 454-587 (RSLAVCYLDL…GTNQIHIYDD (134 aa)). Positions 598-852 (APKWAVRIAQ…SYCEQFETRL (255 aa)) constitute an EAL domain.

The protein resides in the cell membrane. The enzyme catalyses 3',3'-c-di-GMP + H2O = 5'-phosphoguanylyl(3'-&gt;5')guanosine + H(+). Functionally, affects motility and biofilm formation, and is linked to the regulation of sulfate uptake and assimilation. This Shewanella oneidensis (strain ATCC 700550 / JCM 31522 / CIP 106686 / LMG 19005 / NCIMB 14063 / MR-1) protein is Cyclic di-GMP phosphodiesterase PdeB (pdeB).